A 565-amino-acid polypeptide reads, in one-letter code: Oxygen-dependent choline dehydrogenase (565 aa).

Residue 7 to 36 (DYIICGAGSAGNVLATRLTEDPGVTVLLLE) coordinates FAD. The active-site Proton acceptor is H474.

This sequence belongs to the GMC oxidoreductase family. FAD is required as a cofactor.

It carries out the reaction choline + A = betaine aldehyde + AH2. The catalysed reaction is betaine aldehyde + NAD(+) + H2O = glycine betaine + NADH + 2 H(+). It participates in amine and polyamine biosynthesis; betaine biosynthesis via choline pathway; betaine aldehyde from choline (cytochrome c reductase route): step 1/1. Its function is as follows. Involved in the biosynthesis of the osmoprotectant glycine betaine. Catalyzes the oxidation of choline to betaine aldehyde and betaine aldehyde to glycine betaine at the same rate. The chain is Oxygen-dependent choline dehydrogenase from Burkholderia pseudomallei (strain 1710b).